Consider the following 226-residue polypeptide: Putative O-methyltransferase Mvan_4497 (226 aa).

Residues Val-53, Glu-75, 77 to 78, Ser-83, Asp-101, and Val-102 each bind S-adenosyl-L-methionine; that span reads GT. Substrate is bound at residue Asp-149.

It belongs to the class I-like SAM-binding methyltransferase superfamily. Cation-dependent O-methyltransferase family.

This Mycolicibacterium vanbaalenii (strain DSM 7251 / JCM 13017 / BCRC 16820 / KCTC 9966 / NRRL B-24157 / PYR-1) (Mycobacterium vanbaalenii) protein is Putative O-methyltransferase Mvan_4497.